Here is a 254-residue protein sequence, read N- to C-terminus: NAD-dependent protein deacylase 2 (254 aa).

The Deacetylase sirtuin-type domain occupies 1–254; the sequence is MDEHSIMQAV…LPALVRRLGV (254 aa). 24-44 provides a ligand contact to NAD(+); the sequence is GAGMSADSGLETYRDPETGVW. Substrate-binding residues include Tyr-69 and Arg-72. 105–108 is an NAD(+) binding site; sequence QNID. His-123 functions as the Proton acceptor in the catalytic mechanism. The Zn(2+) site is built by Cys-131, Cys-134, Cys-157, and Cys-160. Residues 197-199 and Ala-241 each bind NAD(+); that span reads GTS.

The protein belongs to the sirtuin family. Class III subfamily. It depends on Zn(2+) as a cofactor.

It is found in the cytoplasm. The enzyme catalyses N(6)-acetyl-L-lysyl-[protein] + NAD(+) + H2O = 2''-O-acetyl-ADP-D-ribose + nicotinamide + L-lysyl-[protein]. It catalyses the reaction N(6)-succinyl-L-lysyl-[protein] + NAD(+) + H2O = 2''-O-succinyl-ADP-D-ribose + nicotinamide + L-lysyl-[protein]. NAD-dependent lysine deacetylase and desuccinylase that specifically removes acetyl and succinyl groups on target proteins. Modulates the activities of several proteins which are inactive in their acylated form. The sequence is that of NAD-dependent protein deacylase 2 from Corynebacterium efficiens (strain DSM 44549 / YS-314 / AJ 12310 / JCM 11189 / NBRC 100395).